We begin with the raw amino-acid sequence, 462 residues long: Cysteine--tRNA ligase (462 aa).

C24 serves as a coordination point for Zn(2+). Residues P26–H36 carry the 'HIGH' region motif. The Zn(2+) site is built by C199, H224, and E228. The short motif at K256–S260 is the 'KMSKS' region element. K259 provides a ligand contact to ATP.

The protein belongs to the class-I aminoacyl-tRNA synthetase family. In terms of assembly, monomer. Requires Zn(2+) as cofactor.

It is found in the cytoplasm. The enzyme catalyses tRNA(Cys) + L-cysteine + ATP = L-cysteinyl-tRNA(Cys) + AMP + diphosphate. This Campylobacter jejuni subsp. doylei (strain ATCC BAA-1458 / RM4099 / 269.97) protein is Cysteine--tRNA ligase.